Consider the following 669-residue polypeptide: Cell surface receptor daf-1 (669 aa).

An N-terminal signal peptide occupies residues 1 to 19 (MRIRHVVFCLLALVYGAET). Topologically, residues 20–170 (SDDDLDERTN…APGPQQSSTW (151 aa)) are extracellular. 4 N-linked (GlcNAc...) asparagine glycosylation sites follow: N49, N79, N133, and N154. A helical membrane pass occupies residues 171-191 (LILTILALLTFIVLLGIAIFL). Topologically, residues 192-669 (TRKSWEAKFD…NDDSSRPLLG (478 aa)) are cytoplasmic. One can recognise a GS domain in the interval 262–292 (NNMKDMLDVLEETSGSGMGPTTLHKLTIGGQ). A Protein kinase domain is found at 293-593 (IRLTGRVGSG…KRMDERQQLL (301 aa)). Residues 299 to 307 (VGSGRFGNV) and K320 each bind ATP. The active-site Proton acceptor is the D423. Composition is skewed to basic and acidic residues over residues 611–624 (DRKI…KDES) and 633–650 (VQKE…RETA). Positions 611–669 (DRKILGPQKPKDESPANGAPRIVQKEIDREDEQENWRETAKTPNGHISSNDDSSRPLLG) are disordered. Residues 651–661 (KTPNGHISSND) show a composition bias toward polar residues.

This sequence belongs to the protein kinase superfamily. TKL Ser/Thr protein kinase family. TGFB receptor subfamily. May interact with daf-4 to regulate dauer larva development. In terms of tissue distribution, head and ventral nerve cord from embryos to adults. Expressed in many sensory neurons. Subset of head neurons show coexpression with daf-4 when dauer/nondauer decision is made. Also expressed in non-neuronal cells: membraneous sheath surrounding the distal end of the intestine and in the distal tip cell of the gonad.

The protein resides in the membrane. It carries out the reaction L-threonyl-[receptor-protein] + ATP = O-phospho-L-threonyl-[receptor-protein] + ADP + H(+). The enzyme catalyses L-seryl-[receptor-protein] + ATP = O-phospho-L-seryl-[receptor-protein] + ADP + H(+). Its function is as follows. Probably involved in a TGF-beta pathway. May be a receptor for TGF-beta-like ligand daf-7. Controls the decision of whether or not larvae enter a developmentally arrested state, known as dauer, in response to environmental conditions. Involved in regulating entry into quiescence triggered by satiety. Involved in sensitivity to CO2 levels. In AWC neurons, acts to promote expression of srsx-3, a member of the GPCR family. The chain is Cell surface receptor daf-1 (daf-1) from Caenorhabditis elegans.